Here is a 1056-residue protein sequence, read N- to C-terminus: PH and SEC7 domain-containing protein 4 (1056 aa).

The segment covering 25–42 (LEPHPGECPRETCSHEDP) has biased composition (basic and acidic residues). Disordered stretches follow at residues 25–71 (LEPH…SGVE), 87–149 (CQEQ…QNRS), 195–239 (LPGD…QWGA), 340–362 (GAPA…APSA), 388–533 (VQPW…GDVQ), and 546–581 (LRTP…LANG). Polar residues-rich tracts occupy residues 88 to 99 (QEQTRATDPPES) and 128 to 137 (NTASPGSPVN). Ser-131, Ser-134, and Ser-143 each carry phosphoserine. Positions 207 to 220 (ENEDSGEDSSEPEG) are enriched in acidic residues. A Phosphoserine modification is found at Ser-413. The segment covering 414-423 (QDRDEREGGH) has biased composition (basic and acidic residues). The span at 438 to 456 (RSPASSPEPSSPESESRGP) shows a compositional bias: low complexity. Ser-448, Ser-469, and Ser-491 each carry phosphoserine. Composition is skewed to polar residues over residues 466-476 (QEGSPQLQHHS) and 486-502 (DASQ…QPSS). The span at 504–522 (KKKEAGEAPKPGEEVKSEG) shows a compositional bias: basic and acidic residues. One can recognise an SEC7 domain in the interval 544–736 (ENLRTPMNSS…KALYWSIRSE (193 aa)). The segment covering 548-567 (TPMNSSWLPGSPMPQAQSPE) has biased composition (polar residues). The PH domain occupies 776–892 (PTYKQGILAR…WIARINLAAA (117 aa)). Residues 921–976 (SSLEEQHRSHENCLDAAADDLLDLQRNLPERRGRGRELEEHRLRKEYLEYEKTRYE) are a coiled coil. A disordered region spans residues 1004–1056 (AGGTREPKLSLKKSHSSPSLHQDEAPTTAKVKRNISERRTYRKIIPKRNRNQL). Phosphoserine is present on residues Ser-1019 and Ser-1022. The segment covering 1043 to 1056 (TYRKIIPKRNRNQL) has biased composition (basic residues).

In terms of tissue distribution, widely expressed. Highest levels of expression are found in placenta, pancreas, spleen, thymus and peripheral blood.

It localises to the cell membrane. The protein localises to the cell projection. It is found in the ruffle membrane. In terms of biological role, guanine nucleotide exchange factor for ARF6 and ARL14/ARF7. Through ARL14 activation, controls the movement of MHC class II-containing vesicles along the actin cytoskeleton in dendritic cells. Involved in membrane recycling. Interacts with several phosphatidylinositol phosphate species, including phosphatidylinositol 3,4-bisphosphate, phosphatidylinositol 3,5-bisphosphate and phosphatidylinositol 4,5-bisphosphate. The chain is PH and SEC7 domain-containing protein 4 (PSD4) from Homo sapiens (Human).